Consider the following 197-residue polypeptide: CASP-like protein 1B1 (197 aa).

N-acetylalanine is present on Ala2. Topologically, residues 2 to 17 are cytoplasmic; sequence AVSKLTLAATSGKSCK. The helical transmembrane segment at 18–38 threads the bilayer; the sequence is ILLGLRLLAFSATLSAAIVMG. The Extracellular segment spans residues 39–69; the sequence is LNKETKTFIVGKVGNTPIQATFTAKFDHTPA. The helical transmembrane segment at 70–90 threads the bilayer; that stretch reads FVFFVVANAMVSFHNLLMIAL. The Cytoplasmic portion of the chain corresponds to 91 to 106; sequence QIFGGKMEFTGFRLLS. A helical transmembrane segment spans residues 107–127; it reads VAILDMLNVTLISAAANAAAF. At 128 to 156 the chain is on the extracellular side; the sequence is MAEVGKNGNKHARWDKICDRFATYCDHGA. Residues 157–177 traverse the membrane as a helical segment; it reads GALIAAFAGVILMLIISAASI. The Cytoplasmic segment spans residues 178-197; it reads SRLVQPNKCCSTTASPSVVP.

Belongs to the Casparian strip membrane proteins (CASP) family. In terms of assembly, homodimer and heterodimers.

Its subcellular location is the cell membrane. The protein is CASP-like protein 1B1 of Arabidopsis thaliana (Mouse-ear cress).